Here is a 208-residue protein sequence, read N- to C-terminus: Vacuolar iron transporter homolog 5 (208 aa).

Topologically, residues 1 to 41 (MAAMMNNERSSSNKLQVDAENPAAVGDELDLAARANWLRAA) are cytoplasmic. Residues 42-62 (VLGANDGLVSTASLMLGVGAV) form a helical membrane-spanning segment. At 63-69 (KAEARAM) the chain is on the vacuolar side. Residues 70-90 (VISGFAGLLAGACSMAIGEFV) traverse the membrane as a helical segment. Topologically, residues 91-125 (SVCSQRDVELAQLERDGKRGGEEEKALPSPAQAAA) are cytoplasmic. The helical transmembrane segment at 126–146 (ASAMAFSVGAVVPLLAAGFIV) threads the bilayer. Residues 147 to 151 (NYRLR) lie on the Vacuolar side of the membrane. A helical membrane pass occupies residues 152–172 (IAVVVAVASVALAAFGCVGAV). Topologically, residues 173 to 184 (LGRAAVARSSAR) are cytoplasmic. Residues 185-205 (VVLGGWAAMGITFGLMRLFKA) traverse the membrane as a helical segment. The Vacuolar segment spans residues 206–208 (SGI).

It belongs to the CCC1 family.

It is found in the vacuole membrane. The catalysed reaction is Fe(2+)(in) = Fe(2+)(out). In terms of biological role, probable vacuolar iron transporter that may be involved in the regulation of iron distribution throughout the plant. In Oryza sativa subsp. japonica (Rice), this protein is Vacuolar iron transporter homolog 5.